A 185-amino-acid polypeptide reads, in one-letter code: Large ribosomal subunit protein uL5 (185 aa).

Belongs to the universal ribosomal protein uL5 family. Part of the 50S ribosomal subunit; part of the 5S rRNA/L5/L18/L25 subcomplex. Contacts the 5S rRNA and the P site tRNA. Forms a bridge to the 30S subunit in the 70S ribosome.

Its function is as follows. This is one of the proteins that bind and probably mediate the attachment of the 5S RNA into the large ribosomal subunit, where it forms part of the central protuberance. In the 70S ribosome it contacts protein S13 of the 30S subunit (bridge B1b), connecting the 2 subunits; this bridge is implicated in subunit movement. Contacts the P site tRNA; the 5S rRNA and some of its associated proteins might help stabilize positioning of ribosome-bound tRNAs. The protein is Large ribosomal subunit protein uL5 of Bartonella quintana (strain Toulouse) (Rochalimaea quintana).